The sequence spans 257 residues: Putative hydro-lyase BceJ2315_40370 (257 aa).

The protein belongs to the D-glutamate cyclase family.

This Burkholderia cenocepacia (strain ATCC BAA-245 / DSM 16553 / LMG 16656 / NCTC 13227 / J2315 / CF5610) (Burkholderia cepacia (strain J2315)) protein is Putative hydro-lyase BceJ2315_40370.